The following is a 417-amino-acid chain: Serine/threonine transporter SstT (417 aa).

Helical transmembrane passes span 21-41, 49-69, 83-103, 142-162, 193-213, 218-238, 291-311, and 331-351; these read ILAG…VAKM, FISA…MASI, ILVL…VASF, ALIN…GLAL, IGIF…ALAG, LLVL…LIVF, IPLG…ILTL, and LVAA…LLLI.

This sequence belongs to the dicarboxylate/amino acid:cation symporter (DAACS) (TC 2.A.23) family.

It localises to the cell inner membrane. It catalyses the reaction L-serine(in) + Na(+)(in) = L-serine(out) + Na(+)(out). The enzyme catalyses L-threonine(in) + Na(+)(in) = L-threonine(out) + Na(+)(out). Involved in the import of serine and threonine into the cell, with the concomitant import of sodium (symport system). The sequence is that of Serine/threonine transporter SstT from Proteus mirabilis (strain HI4320).